The following is a 530-amino-acid chain: Capsid protein VP1 (530 aa).

The tract at residues M1–Q20 is disordered. Residues M1–E225 are shell domain. Residues Q226–G278 are P1 sub-domain 1. Residues Q226–R530 form a protruding domain region. The tract at residues T279–L405 is P2 sub-domain. The segment at A406–R530 is P1 sub-domain 2. Residues R523–R530 form a plays a role in binding to host histo-blood group structures antigens and in the formation of P-particles region.

The protein belongs to the caliciviridae capsid protein family. In terms of assembly, homodimer. Homomultimer. Interacts with the minor capsid protein VP2. Interacts (via C-terminus) with host type I histo-blood group structures antigens at the surface of target cells. In terms of processing, may be cleaved by host protease to generate soluble capsid protein. Assembled capsid cannot be cleaved.

Its subcellular location is the virion. The protein localises to the host cytoplasm. Its function is as follows. Capsid protein self assembles to form an icosahedral capsid with a T=3 symmetry, about 38 nm in diameter, and consisting of 180 capsid proteins. A smaller form of capsid with a diameter of 23 nm might be capsid proteins assembled as icosahedron with T=1 symmetry. The capsid encapsulates the genomic RNA and is decorated with VP2 proteins. Attaches virion to target cells by binding histo-blood group antigens (HBGAs) present on gastroduodenal epithelial cells. The soluble capsid protein may play a role in viral immunoevasion. In Norovirus (strain Human/NoV/United States/Norwalk/1968/GI) (Hu/NV/NV/1968/US), this protein is Capsid protein VP1.